A 53-amino-acid chain; its full sequence is Large ribosomal subunit protein bL32c (53 aa).

A disordered region spans residues Met1–Ile21.

Belongs to the bacterial ribosomal protein bL32 family.

It localises to the plastid. The protein resides in the chloroplast. This chain is Large ribosomal subunit protein bL32c (rpl32), found in Cyanidium caldarium (Red alga).